A 502-amino-acid chain; its full sequence is ATP synthase subunit alpha, chloroplastic (502 aa).

170 to 177 (GDRQTGKS) serves as a coordination point for ATP.

The protein belongs to the ATPase alpha/beta chains family. As to quaternary structure, F-type ATPases have 2 components, CF(1) - the catalytic core - and CF(0) - the membrane proton channel. CF(1) has five subunits: alpha(3), beta(3), gamma(1), delta(1), epsilon(1). CF(0) has four main subunits: a, b, b' and c.

It localises to the plastid. The protein localises to the chloroplast thylakoid membrane. The catalysed reaction is ATP + H2O + 4 H(+)(in) = ADP + phosphate + 5 H(+)(out). Produces ATP from ADP in the presence of a proton gradient across the membrane. The alpha chain is a regulatory subunit. This chain is ATP synthase subunit alpha, chloroplastic, found in Guillardia theta (Cryptophyte).